The chain runs to 93 residues: MIRSELIQKIADENPHLTQRHVERIVNTVFEEIIEALARGDRVELRGFGAFSVKARDARVGRNPRTGEAVEVEDKKVPFFKTGKLLRDRLNAK.

Belongs to the bacterial histone-like protein family. As to quaternary structure, heterodimer of an alpha and a beta chain.

In terms of biological role, this protein is one of the two subunits of integration host factor, a specific DNA-binding protein that functions in genetic recombination as well as in transcriptional and translational control. This Cereibacter sphaeroides (strain ATCC 17023 / DSM 158 / JCM 6121 / CCUG 31486 / LMG 2827 / NBRC 12203 / NCIMB 8253 / ATH 2.4.1.) (Rhodobacter sphaeroides) protein is Integration host factor subunit beta (ihfB).